The following is a 234-amino-acid chain: Small ribosomal subunit protein uS3 (234 aa).

The KH type-2 domain occupies 39–107; the sequence is IRKYVKKELY…EIAVNIKEER (69 aa). Basic and acidic residues predominate over residues 213 to 222; sequence PTEKAEETTS. Residues 213–234 are disordered; it reads PTEKAEETTSKPKRRPAKKRGK. The segment covering 223–234 has biased composition (basic residues); the sequence is KPKRRPAKKRGK.

Belongs to the universal ribosomal protein uS3 family. As to quaternary structure, part of the 30S ribosomal subunit. Forms a tight complex with proteins S10 and S14.

In terms of biological role, binds the lower part of the 30S subunit head. Binds mRNA in the 70S ribosome, positioning it for translation. In Aliarcobacter butzleri (strain RM4018) (Arcobacter butzleri), this protein is Small ribosomal subunit protein uS3.